The primary structure comprises 241 residues: ATP synthase subunit a (241 aa).

Helical transmembrane passes span 21–41 (LASI…AIAC), 84–104 (VTLI…AIVI), 116–136 (DATV…YYGI), 183–203 (ILIG…WIIG), and 207–227 (LIAW…IFIM).

The protein belongs to the ATPase A chain family. F-type ATPases have 2 components, CF(1) - the catalytic core - and CF(0) - the membrane proton channel. CF(1) has five subunits: alpha(3), beta(3), gamma(1), delta(1), epsilon(1). CF(0) has three main subunits: a(1), b(2) and c(9-12). The alpha and beta chains form an alternating ring which encloses part of the gamma chain. CF(1) is attached to CF(0) by a central stalk formed by the gamma and epsilon chains, while a peripheral stalk is formed by the delta and b chains.

The protein localises to the cell membrane. In terms of biological role, key component of the proton channel; it plays a direct role in the translocation of protons across the membrane. This chain is ATP synthase subunit a, found in Staphylococcus carnosus (strain TM300).